A 301-amino-acid polypeptide reads, in one-letter code: 4-hydroxy-tetrahydrodipicolinate synthase (301 aa).

Thr-57 lines the pyruvate pocket. Tyr-145 functions as the Proton donor/acceptor in the catalytic mechanism. The active-site Schiff-base intermediate with substrate is the Lys-173. Pyruvate is bound at residue Ile-213.

The protein belongs to the DapA family. In terms of assembly, homotetramer; dimer of dimers.

The protein localises to the cytoplasm. The catalysed reaction is L-aspartate 4-semialdehyde + pyruvate = (2S,4S)-4-hydroxy-2,3,4,5-tetrahydrodipicolinate + H2O + H(+). Its pathway is amino-acid biosynthesis; L-lysine biosynthesis via DAP pathway; (S)-tetrahydrodipicolinate from L-aspartate: step 3/4. In terms of biological role, catalyzes the condensation of (S)-aspartate-beta-semialdehyde [(S)-ASA] and pyruvate to 4-hydroxy-tetrahydrodipicolinate (HTPA). This Corynebacterium diphtheriae (strain ATCC 700971 / NCTC 13129 / Biotype gravis) protein is 4-hydroxy-tetrahydrodipicolinate synthase.